The sequence spans 549 residues: Cytochrome bc1 complex cytochrome b subunit (549 aa).

A helical membrane pass occupies residues 54 to 74 (VCLYSFIIIILTGVYLTLFFH). The heme site is built by His118 and His132. The next 3 helical transmembrane spans lie at 122-142 (ALIFLAGMFVHMMRVFFTGAF), 150-170 (WLFGFLLLVLGMFTGFTGYSL), and 182-202 (FMEGAILSVPIVGTYISFFLF). Positions 219 and 234 each coordinate heme. The next 5 helical transmembrane spans lie at 220-240 (ILLLPGIMLGLLVGHLILVFY), 269-289 (AGGFFFLVFGVISVVSAIATI), 334-354 (LVLGVFVPLLIFPLVLAAIAV), 389-409 (FGVAWLTVYFVLLIGGGNDLW), and 417-437 (INAITWFVRIAFFVGPVVAFI).

It belongs to the cytochrome b family. The cytochrome bc1 complex is composed of a cytochrome b (QcrB), the Rieske iron-sulfur protein (QcrA) and a diheme cytochrome c (QcrC) subunit. It depends on heme as a cofactor.

Its subcellular location is the cell membrane. The catalysed reaction is a quinol + 2 Fe(III)-[cytochrome c](out) = a quinone + 2 Fe(II)-[cytochrome c](out) + 2 H(+)(out). In terms of biological role, cytochrome b subunit of the cytochrome bc1 complex, an essential component of the respiratory electron transport chain required for ATP synthesis. The bc1 complex catalyzes the oxidation of ubiquinol and the reduction of cytochrome c in the respiratory chain. The bc1 complex operates through a Q-cycle mechanism that couples electron transfer to generation of the proton gradient that drives ATP synthesis. The cytochrome b subunit contains two ubiquinol reactive sites: the oxidation (QP) site and the reduction (QN) site. In Streptomyces lividans, this protein is Cytochrome bc1 complex cytochrome b subunit (qcrB).